Here is a 259-residue protein sequence, read N- to C-terminus: 2-oxoglutaramate amidase (259 aa).

The 236-residue stretch at 3–238 (WTISCLQFDI…EGIVRAEIDL (236 aa)) folds into the CN hydrolase domain. Catalysis depends on E42, which acts as the Proton acceptor. The active-site Proton donor is the K111. C145 serves as the catalytic Nucleophile.

Belongs to the carbon-nitrogen hydrolase superfamily. NIT1/NIT2 family.

The enzyme catalyses 2-oxoglutaramate + H2O = 2-oxoglutarate + NH4(+). Involved in the methylthioribose (MTR) recycling pathway. Probably catalyzes the conversion of 2-oxoglutaramate to 2-oxoglutarate. This Bacillus subtilis (strain 168) protein is 2-oxoglutaramate amidase.